Reading from the N-terminus, the 65-residue chain is MPKMKSHRGACKRFKATASGRIKRERMNGSHNLEHKNRKRTRRLHQSALLECTKKERQIKRMILA.

Belongs to the bacterial ribosomal protein bL35 family.

This chain is Large ribosomal subunit protein bL35, found in Chlorobium phaeovibrioides (strain DSM 265 / 1930) (Prosthecochloris vibrioformis (strain DSM 265)).